The following is a 261-amino-acid chain: Cytochrome c oxidase subunit 3 (261 aa).

Topologically, residues Met1 to Pro15 are mitochondrial matrix. A helical membrane pass occupies residues Trp16–Trp34. Residues Phe35–Thr40 are Mitochondrial intermembrane-facing. A helical transmembrane segment spans residues Thr41 to Thr66. At Phe67–Thr72 the chain is on the mitochondrial matrix side. Residues Pro73–Ser105 traverse the membrane as a helical segment. Over Leu106–Glu128 the chain is Mitochondrial intermembrane. Residues Val129–Met152 form a helical membrane-spanning segment. Residues Glu153–Asn155 lie on the Mitochondrial matrix side of the membrane. Residues Arg156–Glu183 form a helical membrane-spanning segment. Over Ala184–Asp190 the chain is Mitochondrial intermembrane. The helical transmembrane segment at Gly191–Leu223 threads the bilayer. The Mitochondrial matrix segment spans residues Lys224–His232. The helical transmembrane segment at Phe233–Ile256 threads the bilayer. The Mitochondrial intermembrane portion of the chain corresponds to Tyr257–Ser261.

It belongs to the cytochrome c oxidase subunit 3 family. In terms of assembly, component of the cytochrome c oxidase (complex IV, CIV), a multisubunit enzyme composed of 14 subunits. The complex is composed of a catalytic core of 3 subunits MT-CO1, MT-CO2 and MT-CO3, encoded in the mitochondrial DNA, and 11 supernumerary subunits COX4I, COX5A, COX5B, COX6A, COX6B, COX6C, COX7A, COX7B, COX7C, COX8 and NDUFA4, which are encoded in the nuclear genome. The complex exists as a monomer or a dimer and forms supercomplexes (SCs) in the inner mitochondrial membrane with NADH-ubiquinone oxidoreductase (complex I, CI) and ubiquinol-cytochrome c oxidoreductase (cytochrome b-c1 complex, complex III, CIII), resulting in different assemblies (supercomplex SCI(1)III(2)IV(1) and megacomplex MCI(2)III(2)IV(2)).

Its subcellular location is the mitochondrion inner membrane. The enzyme catalyses 4 Fe(II)-[cytochrome c] + O2 + 8 H(+)(in) = 4 Fe(III)-[cytochrome c] + 2 H2O + 4 H(+)(out). In terms of biological role, component of the cytochrome c oxidase, the last enzyme in the mitochondrial electron transport chain which drives oxidative phosphorylation. The respiratory chain contains 3 multisubunit complexes succinate dehydrogenase (complex II, CII), ubiquinol-cytochrome c oxidoreductase (cytochrome b-c1 complex, complex III, CIII) and cytochrome c oxidase (complex IV, CIV), that cooperate to transfer electrons derived from NADH and succinate to molecular oxygen, creating an electrochemical gradient over the inner membrane that drives transmembrane transport and the ATP synthase. Cytochrome c oxidase is the component of the respiratory chain that catalyzes the reduction of oxygen to water. Electrons originating from reduced cytochrome c in the intermembrane space (IMS) are transferred via the dinuclear copper A center (CU(A)) of subunit 2 and heme A of subunit 1 to the active site in subunit 1, a binuclear center (BNC) formed by heme A3 and copper B (CU(B)). The BNC reduces molecular oxygen to 2 water molecules using 4 electrons from cytochrome c in the IMS and 4 protons from the mitochondrial matrix. This chain is Cytochrome c oxidase subunit 3 (MT-CO3), found in Gazella bennettii (Chinkara).